The sequence spans 1044 residues: DEMETER-like protein 3 (1044 aa).

A compositionally biased stretch (polar residues) spans 1–15 (MLTDGSQHTYQNGET). The segment at 1 to 107 (MLTDGSQHTY…KPRNPATTRL (107 aa)) is disordered. Residues 16–30 (KNSKEHERKCDESAH) are compositionally biased toward basic and acidic residues. Residues 38-53 (THKKKEKKNSKEKHGI) are compositionally biased toward basic residues. The span at 54–66 (KHSESEHLQDDIS) shows a compositional bias: basic and acidic residues. Residues 71 to 89 (GKGRRRNSKGTPKKLRFNR) are compositionally biased toward basic residues. Positions 348-445 (KVNLDPETIK…AFMSVAAKFP (98 aa)) are DEMETER. The [4Fe-4S] cluster site is built by C678, C685, C688, and C694. Residues 1024–1044 (VRRLHTPPDERGPKFMSDDDI) are disordered.

Belongs to the DNA glycosylase family. DEMETER subfamily. It depends on [4Fe-4S] cluster as a cofactor.

Its subcellular location is the nucleus. Functionally, potential transcriptional activator that may act by nicking the target promoter. Catalyzes the release of 5-methylcytosine (5-meC) from DNA by a glycosylase/lyase mechanism. In Arabidopsis thaliana (Mouse-ear cress), this protein is DEMETER-like protein 3 (DML3).